A 182-amino-acid polypeptide reads, in one-letter code: Ribulose bisphosphate carboxylase small subunit, chloroplastic 6 (182 aa).

The N-terminal 41 residues, 1–41 (MAATMMSKTIISSKQCSKPIAPPKVSINKGFVNTSAAIKNR), are a transit peptide targeting the chloroplast.

Belongs to the RuBisCO small chain family. Heterohexadecamer of 8 large and 8 small subunits.

Its subcellular location is the plastid. It is found in the chloroplast. Its function is as follows. RuBisCO catalyzes two reactions: the carboxylation of D-ribulose 1,5-bisphosphate, the primary event in carbon dioxide fixation, as well as the oxidative fragmentation of the pentose substrate. Both reactions occur simultaneously and in competition at the same active site. Although the small subunit is not catalytic it is essential for maximal activity. This chain is Ribulose bisphosphate carboxylase small subunit, chloroplastic 6, found in Acetabularia peniculus (Green alga).